The primary structure comprises 692 residues: Elongation factor G (692 aa).

The 275-residue stretch at 8–282 (ENTRNIGIMA…AVIDYLPSPL (275 aa)) folds into the tr-type G domain. Residues 17 to 24 (AHIDAGKT), 81 to 85 (DTPGH), and 135 to 138 (NKMD) contribute to the GTP site.

It belongs to the TRAFAC class translation factor GTPase superfamily. Classic translation factor GTPase family. EF-G/EF-2 subfamily.

It is found in the cytoplasm. Its function is as follows. Catalyzes the GTP-dependent ribosomal translocation step during translation elongation. During this step, the ribosome changes from the pre-translocational (PRE) to the post-translocational (POST) state as the newly formed A-site-bound peptidyl-tRNA and P-site-bound deacylated tRNA move to the P and E sites, respectively. Catalyzes the coordinated movement of the two tRNA molecules, the mRNA and conformational changes in the ribosome. The chain is Elongation factor G from Bacillus cereus (strain AH820).